The primary structure comprises 201 residues: Probable molybdenum cofactor guanylyltransferase (201 aa).

GTP is bound by residues 16 to 18 (LAG), Lys28, Asp75, and Asp107. Mg(2+) is bound at residue Asp107.

The protein belongs to the MobA family. Requires Mg(2+) as cofactor.

It localises to the cytoplasm. It catalyses the reaction Mo-molybdopterin + GTP + H(+) = Mo-molybdopterin guanine dinucleotide + diphosphate. Transfers a GMP moiety from GTP to Mo-molybdopterin (Mo-MPT) cofactor (Moco or molybdenum cofactor) to form Mo-molybdopterin guanine dinucleotide (Mo-MGD) cofactor. This chain is Probable molybdenum cofactor guanylyltransferase, found in Mycobacterium ulcerans (strain Agy99).